The following is a 159-amino-acid chain: Transcription elongation factor GreA (159 aa).

Belongs to the GreA/GreB family.

Functionally, necessary for efficient RNA polymerase transcription elongation past template-encoded arresting sites. The arresting sites in DNA have the property of trapping a certain fraction of elongating RNA polymerases that pass through, resulting in locked ternary complexes. Cleavage of the nascent transcript by cleavage factors such as GreA or GreB allows the resumption of elongation from the new 3'terminus. GreA releases sequences of 2 to 3 nucleotides. This chain is Transcription elongation factor GreA, found in Orientia tsutsugamushi (strain Boryong) (Rickettsia tsutsugamushi).